The chain runs to 688 residues: Glycine--tRNA ligase beta subunit (688 aa).

Belongs to the class-II aminoacyl-tRNA synthetase family. As to quaternary structure, tetramer of two alpha and two beta subunits.

It localises to the cytoplasm. The catalysed reaction is tRNA(Gly) + glycine + ATP = glycyl-tRNA(Gly) + AMP + diphosphate. This chain is Glycine--tRNA ligase beta subunit, found in Listeria monocytogenes serovar 1/2a (strain ATCC BAA-679 / EGD-e).